The following is a 444-amino-acid chain: Adenine permease AdeQ (444 aa).

Over 1 to 29 (MNNDNTDYVSNESGTLSRLFKLPQHGTTV) the chain is Cytoplasmic. A helical transmembrane segment spans residues 30 to 53 (RTELIAGMTTFLTMVYIVFVNPQI). The Periplasmic segment spans residues 54–63 (LGAAQMDPKV). A helical membrane pass occupies residues 64–82 (VFVTTCLIAGIGSIAMGIF). Residues 83–84 (AN) are Cytoplasmic-facing. A discontinuously helical transmembrane segment spans residues 85–101 (LPVALAPAMGLNAFFAF). Residues 102 to 113 (VVVGAMGISWQT) lie on the Periplasmic side of the membrane. A helical membrane pass occupies residues 114–133 (GMGAIFWGAVGLFLLTLFRI). At 134–145 (RYWMISNIPLSL) the chain is on the cytoplasmic side. The helical transmembrane segment at 146–166 (RIGITSGIGLFIALMGLKNTG) threads the bilayer. Topologically, residues 167–182 (VIVANKDTLVMIGDLS) are periplasmic. The helical transmembrane segment at 183-200 (SHGVLLGILGFFIITVLS) threads the bilayer. Residues 201-204 (SRHF) are Cytoplasmic-facing. Residues 205-223 (HAAVLVSIVVTSCCGLFFG) form a helical membrane-spanning segment. The Periplasmic segment spans residues 224-251 (DVHFSGVYSIPPDISGVIGEVDLSGALT). A helical membrane pass occupies residues 252 to 280 (LELAGIIFSFMLINLFDSSGTLIGVTDKA). At 281–293 (GLIDGNGKFPNMN) the chain is on the cytoplasmic side. A helical transmembrane segment spans residues 294 to 309 (KALYVDSVSSVAGAFI). The Periplasmic portion of the chain corresponds to 310–311 (GT). A discontinuously helical membrane pass occupies residues 312 to 327 (SSVTAYIESTSGVAVG). Over 328–331 (GRTG) the chain is Cytoplasmic. The helical transmembrane segment at 332-346 (LTAVVVGVMFLLVMF) threads the bilayer. At 347–357 (FSPLVAIVPPY) the chain is on the periplasmic side. Residues 358–377 (ATAGALIFVGVLMTSSLARV) traverse the membrane as a helical segment. Over 378 to 382 (NWDDF) the chain is Cytoplasmic. An intramembrane region (discontinuously helical) is located at residues 383-418 (TESVPAFITTVMMPFTFSITEGIALGFMSYCIMKVC). At 419 to 444 (TGRWRDLNLCVVVVAALFALKIILVD) the chain is on the cytoplasmic side.

It belongs to the nucleobase:cation symporter-2 (NCS2) (TC 2.A.40) family. Azg-like subfamily.

Its subcellular location is the cell inner membrane. High-affinity transporter for adenine. In Escherichia coli (strain K12), this protein is Adenine permease AdeQ (adeQ).